A 162-amino-acid polypeptide reads, in one-letter code: Cyclic pyranopterin monophosphate synthase (162 aa).

Residues 79–81 and 117–118 contribute to the substrate site; these read LCH and ME. Asp-132 is a catalytic residue.

This sequence belongs to the MoaC family. In terms of assembly, homohexamer; trimer of dimers.

The enzyme catalyses (8S)-3',8-cyclo-7,8-dihydroguanosine 5'-triphosphate = cyclic pyranopterin phosphate + diphosphate. It functions in the pathway cofactor biosynthesis; molybdopterin biosynthesis. Functionally, catalyzes the conversion of (8S)-3',8-cyclo-7,8-dihydroguanosine 5'-triphosphate to cyclic pyranopterin monophosphate (cPMP). This is Cyclic pyranopterin monophosphate synthase from Bordetella avium (strain 197N).